Consider the following 68-residue polypeptide: UPF0434 protein BTH_I0741 (68 aa).

It belongs to the UPF0434 family.

In Burkholderia thailandensis (strain ATCC 700388 / DSM 13276 / CCUG 48851 / CIP 106301 / E264), this protein is UPF0434 protein BTH_I0741.